The chain runs to 147 residues: uncharacterized protein (147 aa).

Residues 3 to 23 (APMVGMVVLVVTLGAAVLALS) form a helical membrane-spanning segment.

The protein to M.tuberculosis Rv1312.

The protein localises to the membrane. This is an uncharacterized protein from Mycobacterium leprae (strain TN).